The chain runs to 385 residues: 1-deoxy-D-xylulose 5-phosphate reductoisomerase (385 aa).

NADPH-binding residues include Thr-13, Gly-14, Ser-15, Ile-16, Asn-40, and Asn-122. Lys-123 serves as a coordination point for 1-deoxy-D-xylulose 5-phosphate. Glu-124 lines the NADPH pocket. Residue Asp-148 participates in Mn(2+) binding. The 1-deoxy-D-xylulose 5-phosphate site is built by Ser-149, Glu-150, Ser-177, and His-200. A Mn(2+)-binding site is contributed by Glu-150. Position 206 (Gly-206) interacts with NADPH. Residues Ser-213, Asn-218, Lys-219, and Glu-222 each contribute to the 1-deoxy-D-xylulose 5-phosphate site. Glu-222 serves as a coordination point for Mn(2+).

Belongs to the DXR family. Mg(2+) serves as cofactor. Mn(2+) is required as a cofactor.

The enzyme catalyses 2-C-methyl-D-erythritol 4-phosphate + NADP(+) = 1-deoxy-D-xylulose 5-phosphate + NADPH + H(+). Its pathway is isoprenoid biosynthesis; isopentenyl diphosphate biosynthesis via DXP pathway; isopentenyl diphosphate from 1-deoxy-D-xylulose 5-phosphate: step 1/6. Catalyzes the NADPH-dependent rearrangement and reduction of 1-deoxy-D-xylulose-5-phosphate (DXP) to 2-C-methyl-D-erythritol 4-phosphate (MEP). The protein is 1-deoxy-D-xylulose 5-phosphate reductoisomerase of Francisella tularensis subsp. holarctica (strain FTNF002-00 / FTA).